An 810-amino-acid polypeptide reads, in one-letter code: MASVPTQRDEKEKKNDELATAILKDKKRPNRLIIDQSDNDDNSMVMLSQAKMDELGLFRGDSVILKGKKRRETVSIVLNADNCPNDKIKMNKVVRNNLRSRLGDVVSISSAQLEYGKRVHVLPIDDTIEGLTGNLFDVFLRPYFTDAYRPVHKGDIFTVQAAMRTVEFKVVETDPAPACIVAPDTVIHYEGDPIKREEEEEALNEVGYDDLGGVRKQLAQIKEMVELPLRHPQLFKAIGVKPPRGILLFGPPGTGKTLIARAVANETGAFFFLINGPEIMSKMSGESESNLRKAFAECEKNSPAILFIDEIDAIAPKREKAHGEVEKRIVSQLLTLMDGLKTRAHVVVIAATNRPNSIDGALRRFGRFDREIDIGIPDAVGRLEILRIHTKNMKLGEDVDLEQVANECHGFVGADLASLCSEAAIQQIREKMELIDLEDDTIDAEVLNSLAVTMENFRFAMGKSSPSALREAVVETPNTTWSDIGGLQNVKRELQELVQYPVEHPEKYLKFGMQPSRGVLFYGPPGCGKTLLAKAIANECQANFISIKGPELLTMWFGESEANVRDVFDKARAAAPCVLFFDELDSIAKARGGSVGDAGGAADRVINQVLTEMDGMNAKKNVFIIGATNRPDIIDPAVLRPGRLDQLIYIPLPDEASRLQIFKASLRKTPLSADLDLNFLAKNTVGFSGADLTEICQRACKLAIRESIEREIRQEKERQDRSARGEELMEDELADPVPEITRAHFEEAMKFARRSVTDNDIRKYEMFAQTLQQSRGFGNNFKFPGEAPSAGQPVGGNGGSGGNDDDDLYN.

Residues P252 to L258, N353, H389, and G526 to L531 contribute to the ATP site. Positions R713–E727 are enriched in basic and acidic residues. Disordered stretches follow at residues R713 to E732 and F777 to N810. Residues P793–G802 show a composition bias toward gly residues. Positions D805 to N810 are interaction with ufd-2.

The protein belongs to the AAA ATPase family. CDC48 subfamily. Homohexamer; oligomerization is ATP-independent. Forms a ring-shaped particle of 18.3 nm diameter, that displays 6-fold radial symmetry. Interacts with cdc-48.1 and thus may form heterohexamers. Forms a complex composed of ubxn-3, cdc-48.1 and/or cdc-48.2 and substrate cdt-1. Interacts (via N-terminus) with ubxn-3. Interacts (via N-terminus) with atx-3 (via RRDR motif). Interacts (via N-terminus) with ubxn-5. Interacts with ufd-1. Interacts (via DDDLYN motif) with ufd-2. Interacts (via N-terminus) with ubxn-1. Interacts (via N-terminus) with ubxn-2. Interacts (via N-terminus) with ubxn-4. Interacts with ubxn-6. Expressed in body wall muscles.

The protein localises to the cytoplasm. It catalyses the reaction ATP + H2O = ADP + phosphate + H(+). Its activity is regulated as follows. The first ATP-binding region has low ATPase activity. The second ATP-binding region is responsible for ATPase activity. ATP binding to the first ATP-binding region induces intrinsic activity of the second ATP-binding region. While ATP binding to the first ATP-binding region appears to prevent ATP hydrolysis by the second ATP-binding region, ADP-binding to first region promotes the coordinate and cooperative ATPase cycle of the second ATP-binding region. ATP binding to the first ATP-binding region induces a conformational change, promoting the rotation of the first ATP-binding region relative to the second ATP-binding region in the hexamer. Inhibited by N-ethylmaleimide (NEM). Its function is as follows. ATP-dependent chaperone which probably uses the energy provided by ATP hydrolysis to generate mechanical force to unfold substrate proteins, disassemble protein complexes, and disaggregate protein aggregates. However, able to prevent aggregation of unfolded proteins also in an ATP-independent manner. Targets polyubiquitinated proteins for proteasomal degradation by binding to 'Lys-48'-linked polyubiquitin chains. Involved in the cytoplasmic elimination of misfolded proteins exported from the ER. This pathway, known as ERAD, prevents the activation of the unfolded protein response (UPR) caused by the accumulation of misfolded proteins in the ER. Together with udf-2 and chn-1, regulates myosin assembly in body wall muscles by targeting myosin chaperone unc-45 for proteasomal degradation. During oocyte meiosis and together with cdc-48.1, required for chromosome condensation at the diakinesis phase in prophase I and for progression of metaphase I. During the first embryonic cell division, regulates DNA replication and thus chromosome segregation and decondensation, and nuclear envelope re-assembly. In S phase and in association with ufd-1, npl-4.1 and/or npl-4.2 and ubxn-3, ensures the degradation of DNA licensing factor cdt-1 after the initiation of DNA replication and thus the disassembly of the DNA replication CMG helicase complex by promoting the dissociation from chromatin of several of its components including cdc-45 and sld-5. Regulates ubxn-3 nuclear localization during S phase. During the first embryonic cell divisions and together with cdc-48.1, regulates the re-assembly of the nuclear envelope after mitosis possibly by inactivating kinase air-2, a component of the chromosomal passenger complex (CPC). This is Transitional endoplasmic reticulum ATPase homolog 2 (cdc-48.2) from Caenorhabditis elegans.